Here is a 220-residue protein sequence, read N- to C-terminus: Putative cobalt transport protein CbiM (220 aa).

Helical transmembrane passes span 6-26 (GFLP…IVVY), 43-63 (ALVA…FPSV), 74-94 (GLLV…IVLL), 98-118 (LLLA…MGII), and 182-202 (IFTL…AAVI).

It belongs to the CbiM family. As to quaternary structure, forms an energy-coupling factor (ECF) transporter complex composed of an ATP-binding protein (A component, CbiO), a transmembrane protein (T component, CbiQ) and 2 possible substrate-capture proteins (S components, CbiM and CbiN) of unknown stoichimetry.

The protein resides in the cell membrane. The protein operates within cofactor biosynthesis; adenosylcobalamin biosynthesis. Its function is as follows. Part of the energy-coupling factor (ECF) transporter complex CbiMNOQ involved in cobalt import. This chain is Putative cobalt transport protein CbiM, found in Haloquadratum walsbyi (strain DSM 16790 / HBSQ001).